The sequence spans 132 residues: FPRL1 inhibitory protein (132 aa).

Positions 1–28 (MKKNITKVIIASTVIATGLLTQTNDAKA) are cleaved as a signal peptide.

It belongs to the CHIPS/FLIPr family.

Its subcellular location is the secreted. May be involved in countering the first line of host defense mechanisms. Impairs the leukocyte response to FPRL1 agonists by binding directly to host FPRL1. This chain is FPRL1 inhibitory protein (flr), found in Staphylococcus aureus (strain MW2).